Here is a 232-residue protein sequence, read N- to C-terminus: Ion-translocating oxidoreductase complex subunit E (232 aa).

6 consecutive transmembrane segments (helical) span residues 18-38 (GLVQ…LTNA), 39-59 (IGLG…VSLV), 69-89 (IPVF…LINA), 93-113 (GLYL…VIIG), 127-147 (AAFD…LLGA), and 182-202 (NFLL…LIAI).

This sequence belongs to the NqrDE/RnfAE family. As to quaternary structure, the complex is composed of six subunits: RnfA, RnfB, RnfC, RnfD, RnfE and RnfG.

The protein resides in the cell inner membrane. Functionally, part of a membrane-bound complex that couples electron transfer with translocation of ions across the membrane. The protein is Ion-translocating oxidoreductase complex subunit E of Shewanella loihica (strain ATCC BAA-1088 / PV-4).